The chain runs to 382 residues: Ribonuclease D (382 aa).

A 3'-5' exonuclease domain is found at 4–169; it reads ITTTAELASV…DVFAALDADL (166 aa). An HRDC domain is found at 208–289; it reads KPKDLAVMME…QRGLARDPRE (82 aa).

Belongs to the RNase D family. The cofactor is a divalent metal cation.

It is found in the cytoplasm. The catalysed reaction is Exonucleolytic cleavage that removes extra residues from the 3'-terminus of tRNA to produce 5'-mononucleotides.. Functionally, exonuclease involved in the 3' processing of various precursor tRNAs. Initiates hydrolysis at the 3'-terminus of an RNA molecule and releases 5'-mononucleotides. This chain is Ribonuclease D, found in Nitrobacter hamburgensis (strain DSM 10229 / NCIMB 13809 / X14).